A 321-amino-acid polypeptide reads, in one-letter code: Peroxidase 70 (321 aa).

The first 25 residues, 1-25 (MASSSFTSLSVMVLLCLAAAAVASA), serve as a signal peptide directing secretion. Gln26 bears the Pyrrolidone carboxylic acid mark. Disulfide bonds link Cys36–Cys116, Cys69–Cys74, Cys122–Cys317, and Cys201–Cys226. The Proton acceptor role is filled by His67. Residues Asp68, Val71, Gly73, Asp75, and Ser77 each coordinate Ca(2+). Residue Asn81 is glycosylated (N-linked (GlcNAc...) asparagine). Pro164 contributes to the substrate binding site. The N-linked (GlcNAc...) asparagine glycan is linked to Asn172. His194 provides a ligand contact to heme b. Residue Thr195 coordinates Ca(2+). The N-linked (GlcNAc...) asparagine glycan is linked to Asn210. Ca(2+) is bound by residues Asp241, Thr244, and Asp249.

This sequence belongs to the peroxidase family. Classical plant (class III) peroxidase subfamily. Requires heme b as cofactor. Ca(2+) is required as a cofactor.

The protein localises to the secreted. It catalyses the reaction 2 a phenolic donor + H2O2 = 2 a phenolic radical donor + 2 H2O. In terms of biological role, removal of H(2)O(2), oxidation of toxic reductants, biosynthesis and degradation of lignin, suberization, auxin catabolism, response to environmental stresses such as wounding, pathogen attack and oxidative stress. These functions might be dependent on each isozyme/isoform in each plant tissue. The protein is Peroxidase 70 (PER70) of Zea mays (Maize).